A 426-amino-acid polypeptide reads, in one-letter code: Serine--tRNA ligase (426 aa).

The interval 103–129 is disordered; that stretch reads VPNLPDDSVPTGKDENDNPEIRRWGTP. Positions 114–125 are enriched in basic and acidic residues; the sequence is GKDENDNPEIRR. 230 to 232 lines the L-serine pocket; sequence TAE. Residue 261 to 263 participates in ATP binding; the sequence is RSE. Glu-284 lines the L-serine pocket. 348–351 serves as a coordination point for ATP; it reads EISS. Ser-384 contributes to the L-serine binding site.

It belongs to the class-II aminoacyl-tRNA synthetase family. Type-1 seryl-tRNA synthetase subfamily. In terms of assembly, homodimer. The tRNA molecule binds across the dimer.

Its subcellular location is the cytoplasm. It catalyses the reaction tRNA(Ser) + L-serine + ATP = L-seryl-tRNA(Ser) + AMP + diphosphate + H(+). The catalysed reaction is tRNA(Sec) + L-serine + ATP = L-seryl-tRNA(Sec) + AMP + diphosphate + H(+). It participates in aminoacyl-tRNA biosynthesis; selenocysteinyl-tRNA(Sec) biosynthesis; L-seryl-tRNA(Sec) from L-serine and tRNA(Sec): step 1/1. Catalyzes the attachment of serine to tRNA(Ser). Is also able to aminoacylate tRNA(Sec) with serine, to form the misacylated tRNA L-seryl-tRNA(Sec), which will be further converted into selenocysteinyl-tRNA(Sec). The chain is Serine--tRNA ligase from Dichelobacter nodosus (strain VCS1703A).